A 265-amino-acid chain; its full sequence is Indole-3-glycerol phosphate synthase (265 aa).

It belongs to the TrpC family.

The catalysed reaction is 1-(2-carboxyphenylamino)-1-deoxy-D-ribulose 5-phosphate + H(+) = (1S,2R)-1-C-(indol-3-yl)glycerol 3-phosphate + CO2 + H2O. It participates in amino-acid biosynthesis; L-tryptophan biosynthesis; L-tryptophan from chorismate: step 4/5. This is Indole-3-glycerol phosphate synthase from Xanthomonas oryzae pv. oryzae (strain MAFF 311018).